We begin with the raw amino-acid sequence, 566 residues long: Type 2 DNA topoisomerase 6 subunit B (566 aa).

ATP-binding positions include N48, D80, 101 to 102 (TK), 111 to 118 (GQQGIGIS), and K475.

It belongs to the TOP6B family. In terms of assembly, homodimer. Heterotetramer of two Top6A and two Top6B chains.

It catalyses the reaction ATP-dependent breakage, passage and rejoining of double-stranded DNA.. In terms of biological role, relaxes both positive and negative superturns and exhibits a strong decatenase activity. This chain is Type 2 DNA topoisomerase 6 subunit B, found in Thermococcus sibiricus (strain DSM 12597 / MM 739).